The sequence spans 82 residues: Protein MGF 110-5L (82 aa).

An N-terminal signal peptide occupies residues 1–28; sequence MLVIFLGILGLLANQVSSQLVGQLHPTE. N62 is a glycosylation site (N-linked (GlcNAc...) asparagine; by host).

This sequence belongs to the asfivirus MGF 110 family.

Plays a role in virus cell tropism, and may be required for efficient virus replication in macrophages. In Ornithodoros (relapsing fever ticks), this protein is Protein MGF 110-5L.